Reading from the N-terminus, the 368-residue chain is Ribosomal RNA large subunit methyltransferase M (368 aa).

Residues Ser192, 225-228 (APGG), Asp244, Asp264, and Asp281 contribute to the S-adenosyl-L-methionine site. The Proton acceptor role is filled by Lys310.

Belongs to the class I-like SAM-binding methyltransferase superfamily. RNA methyltransferase RlmE family. RlmM subfamily. As to quaternary structure, monomer.

The protein resides in the cytoplasm. The catalysed reaction is cytidine(2498) in 23S rRNA + S-adenosyl-L-methionine = 2'-O-methylcytidine(2498) in 23S rRNA + S-adenosyl-L-homocysteine + H(+). In terms of biological role, catalyzes the 2'-O-methylation at nucleotide C2498 in 23S rRNA. The chain is Ribosomal RNA large subunit methyltransferase M from Colwellia psychrerythraea (strain 34H / ATCC BAA-681) (Vibrio psychroerythus).